The following is a 122-amino-acid chain: UPF0102 protein RL0336 (122 aa).

This sequence belongs to the UPF0102 family.

The chain is UPF0102 protein RL0336 from Rhizobium johnstonii (strain DSM 114642 / LMG 32736 / 3841) (Rhizobium leguminosarum bv. viciae).